Reading from the N-terminus, the 267-residue chain is Acetyl-coenzyme A carboxylase carboxyl transferase subunit beta 1 (267 aa).

The region spanning 9–267 (TWQACPKCGR…NYGIGRSAHG (259 aa)) is the CoA carboxyltransferase N-terminal domain. Residues cysteine 13, cysteine 16, cysteine 31, and cysteine 34 each coordinate Zn(2+). The C4-type zinc-finger motif lies at 13–34 (CPKCGRHVHQRQWGTYQQCPYC).

It belongs to the AccD/PCCB family. Acetyl-CoA carboxylase is a heterohexamer composed of biotin carboxyl carrier protein (AccB), biotin carboxylase (AccC) and two subunits each of ACCase subunit alpha (AccA) and ACCase subunit beta (AccD). It depends on Zn(2+) as a cofactor.

It is found in the cytoplasm. The catalysed reaction is N(6)-carboxybiotinyl-L-lysyl-[protein] + acetyl-CoA = N(6)-biotinyl-L-lysyl-[protein] + malonyl-CoA. The protein operates within lipid metabolism; malonyl-CoA biosynthesis; malonyl-CoA from acetyl-CoA: step 1/1. Its function is as follows. Component of the acetyl coenzyme A carboxylase (ACC) complex. Biotin carboxylase (BC) catalyzes the carboxylation of biotin on its carrier protein (BCCP) and then the CO(2) group is transferred by the transcarboxylase to acetyl-CoA to form malonyl-CoA. The sequence is that of Acetyl-coenzyme A carboxylase carboxyl transferase subunit beta 1 from Lactiplantibacillus plantarum (strain JDM1) (Lactobacillus plantarum).